The sequence spans 242 residues: MTFIKGLPLMLLTISLGCNAAVQPDRTRIVFNANDKATSLRIENQSDKLPYLAYSWIENEKGEKSDALLVALPPIQRLEPKATSQVRVVKQASTTQLPGDRETLFFYNMREIPPAPDKSSDHAILQVAIQSRIKLFWRPAALRKKAGEKVELQLQVSQQGNQLTLKNPTAYYLTIAYLGRNEKGVLPGFKTVMVAPFSTVNTNTGSYSGSQFYLGYMDDYGALRMTTLNCSGQCRLQAVEAK.

The first 20 residues, 1 to 20 (MTFIKGLPLMLLTISLGCNA), serve as a signal peptide directing secretion.

Belongs to the periplasmic pilus chaperone family.

Its subcellular location is the periplasm. Its function is as follows. Could be required for the biogenesis of the putative YbgD fimbria. This is an uncharacterized protein from Escherichia coli (strain K12).